The sequence spans 147 residues: 3-dehydroquinate dehydratase (147 aa).

Tyr-23 (proton acceptor) is an active-site residue. Substrate contacts are provided by Asn-75, His-81, and Asp-88. His-101 acts as the Proton donor in catalysis. Residues 102–103 (LS) and Arg-112 contribute to the substrate site.

The protein belongs to the type-II 3-dehydroquinase family. Homododecamer.

It carries out the reaction 3-dehydroquinate = 3-dehydroshikimate + H2O. The protein operates within metabolic intermediate biosynthesis; chorismate biosynthesis; chorismate from D-erythrose 4-phosphate and phosphoenolpyruvate: step 3/7. Catalyzes a trans-dehydration via an enolate intermediate. This chain is 3-dehydroquinate dehydratase, found in Thioalkalivibrio sulfidiphilus (strain HL-EbGR7).